The sequence spans 468 residues: Probable acid phosphatase DIA3 (468 aa).

A signal peptide spans 1–20 (MVKPVIFAICLGVLLSKALS). The Nucleophile role is filled by His76. N-linked (GlcNAc...) asparagine glycosylation is found at Asn98, Asn163, Asn193, Asn202, Asn238, Asn251, and Asn316. Asp339 functions as the Proton donor in the catalytic mechanism. N-linked (GlcNAc...) asparagine glycans are attached at residues Asn357, Asn391, Asn457, and Asn462.

The protein belongs to the histidine acid phosphatase family.

It catalyses the reaction a phosphate monoester + H2O = an alcohol + phosphate. This chain is Probable acid phosphatase DIA3 (DIA3), found in Saccharomyces cerevisiae (strain ATCC 204508 / S288c) (Baker's yeast).